Reading from the N-terminus, the 765-residue chain is E3 ubiquitin-protein ligase SlrP (765 aa).

The interaction with target proteins stretch occupies residues 1–451; it reads MFNITNIQST…VDYQGPRVLF (451 aa). LRR repeat units follow at residues 200 to 219, 221 to 242, 243 to 262, 263 to 284, 285 to 305, 306 to 325, 326 to 346, 347 to 368, 369 to 389, and 390 to 410; these read QITT…ENLQ, NIKT…LPDT, IQEM…RLPS, ALQS…LPEE, LRYL…LPSG, ITHL…TLPP, GLKT…SLPP, ELQV…LPPT, ITTL…LPAA, and LQIM…LPHF. The linker stretch occupies residues 452 to 461; sequence AMGDFSIVRV. Residues 462-765 form an E3 ubiquitin-protein ligase catalytic domain region; the sequence is TRPLHQAVQG…VSSLMSAYWR (304 aa). Residues 464–758 form the NEL domain; the sequence is PLHQAVQGWL…NILLKKEVSS (295 aa). C546 acts as the Glycyl thioester intermediate in catalysis.

This sequence belongs to the LRR-containing bacterial E3 ligase family. Interacts with host TXN. In terms of processing, ubiquitinated in the presence of host E1 ubiquitin-activating enzyme, E2 ubiquitin-conjugating enzyme and ubiquitin.

It localises to the secreted. The protein resides in the host cytoplasm. The catalysed reaction is S-ubiquitinyl-[E2 ubiquitin-conjugating enzyme]-L-cysteine + [acceptor protein]-L-lysine = [E2 ubiquitin-conjugating enzyme]-L-cysteine + N(6)-ubiquitinyl-[acceptor protein]-L-lysine.. Binding to TXN is inhibited by hydrogen peroxide in vitro. Functionally, effector proteins function to alter host cell physiology and promote bacterial survival in host tissues. This protein is an E3 ubiquitin ligase that interferes with host's ubiquitination pathway. Can ubiquitinate both ubiquitin and host TXN (thioredoxin). Leads to significant decrease of thioredoxin activity and increase of host cell death. This chain is E3 ubiquitin-protein ligase SlrP (slrP), found in Salmonella typhimurium (strain LT2 / SGSC1412 / ATCC 700720).